The chain runs to 505 residues: MEIRAEEISQIIREQIKDYEKQVELSETGRVLSVGDGIARVYGVEKCMSMELLEFPTEHGVVYGLALNLEEDNVGVAIMGEDIHIKEGSEVKRTGRIASVPVGDAVLGRIIDSVGNPVDGKGPIEAKEFSRVEVIAPGVIARQSVNEPMYTGLKAIDAMTPVGRGQRELIIGDRQIGKTAIAVDTIINQKDSGIICIYVAVGQKKSTVAQVVETLRKHGAMDYTIVVAANASDPAALQYIAPYAGCAMGEYYRDKGRHALIIYDDLSKQAAAYRQVSLLLRRPPAREAYPGDIFYNHSRLLERAAKLNAELGGGSLTALPIIETQAGDVSAYIPTNVISITDGQIYLEPNLFFAGVRPAINVGLSVSRVGGAAQTKAMKQVAGRLRLDLAQYRELEAFAKFGSDLDKATQAQLNRGMRMTELLKQPQYQPMPAEREVMSLYAGTRGHLDNIPVEKVLEFEKEMLSFVDRKYPEILSEIKEKKIISEELDGKMKKALEEFAGVFQA.

172 to 179 provides a ligand contact to ATP; it reads GDRQIGKT.

It belongs to the ATPase alpha/beta chains family. As to quaternary structure, F-type ATPases have 2 components, CF(1) - the catalytic core - and CF(0) - the membrane proton channel. CF(1) has five subunits: alpha(3), beta(3), gamma(1), delta(1), epsilon(1). CF(0) has three main subunits: a(1), b(2) and c(9-12). The alpha and beta chains form an alternating ring which encloses part of the gamma chain. CF(1) is attached to CF(0) by a central stalk formed by the gamma and epsilon chains, while a peripheral stalk is formed by the delta and b chains.

Its subcellular location is the cell inner membrane. It catalyses the reaction ATP + H2O + 4 H(+)(in) = ADP + phosphate + 5 H(+)(out). Its function is as follows. Produces ATP from ADP in the presence of a proton gradient across the membrane. The alpha chain is a regulatory subunit. The protein is ATP synthase subunit alpha of Syntrophobacter fumaroxidans (strain DSM 10017 / MPOB).